A 577-amino-acid chain; its full sequence is PTS system lactose-specific EIICB component (577 aa).

Positions 4–405 constitute a PTS EIIC type-3 domain; it reads VFDKLKPVFE…VLDVAIYFPF (402 aa). 9 helical membrane passes run 27-47, 63-83, 100-120, 133-153, 176-196, 219-239, 280-300, 326-346, and 386-406; these read GFIA…VAYV, LMVA…GTTA, INPV…SILP, QGLI…YVCI, LIPM…FKAA, YLGL…GVQG, VMNF…LFAA, FGMP…TPIV, and LAFV…FPFI. Residues 476-577 enclose the PTS EIIB type-3 domain; that stretch reads EVDVLVLCAG…MALDFVESNL (102 aa). The active-site Phosphocysteine intermediate; for EIIB activity is the Cys-483. The residue at position 483 (Cys-483) is a Phosphocysteine; by EIIA.

Its subcellular location is the cell membrane. It catalyses the reaction lactose(out) + N(pros)-phospho-L-histidyl-[protein] = lactose 6-phosphate(in) + L-histidyl-[protein]. Functionally, the phosphoenolpyruvate-dependent sugar phosphotransferase system (sugar PTS), a major carbohydrate active transport system, catalyzes the phosphorylation of incoming sugar substrates concomitantly with their translocation across the cell membrane. The enzyme II LacEF PTS system is involved in lactose transport. This is PTS system lactose-specific EIICB component from Lacticaseibacillus casei (Lactobacillus casei).